The primary structure comprises 279 residues: Formamidopyrimidine-DNA glycosylase (279 aa).

P2 serves as the catalytic Schiff-base intermediate with DNA. The active-site Proton donor is E3. K57 serves as the catalytic Proton donor; for beta-elimination activity. Positions 90, 109, and 151 each coordinate DNA. The FPG-type zinc finger occupies 236–270; sequence FVYGRTGQPCRVCQTPIAVLRLGQRSTFYCPACQQ. R260 acts as the Proton donor; for delta-elimination activity in catalysis.

The protein belongs to the FPG family. As to quaternary structure, monomer. The cofactor is Zn(2+).

The enzyme catalyses Hydrolysis of DNA containing ring-opened 7-methylguanine residues, releasing 2,6-diamino-4-hydroxy-5-(N-methyl)formamidopyrimidine.. It carries out the reaction 2'-deoxyribonucleotide-(2'-deoxyribose 5'-phosphate)-2'-deoxyribonucleotide-DNA = a 3'-end 2'-deoxyribonucleotide-(2,3-dehydro-2,3-deoxyribose 5'-phosphate)-DNA + a 5'-end 5'-phospho-2'-deoxyribonucleoside-DNA + H(+). Its function is as follows. Involved in base excision repair of DNA damaged by oxidation or by mutagenic agents. Acts as a DNA glycosylase that recognizes and removes damaged bases. Has a preference for oxidized purines, such as 7,8-dihydro-8-oxoguanine (8-oxoG). Has AP (apurinic/apyrimidinic) lyase activity and introduces nicks in the DNA strand. Cleaves the DNA backbone by beta-delta elimination to generate a single-strand break at the site of the removed base with both 3'- and 5'-phosphates. This is Formamidopyrimidine-DNA glycosylase from Methylobacillus flagellatus (strain ATCC 51484 / DSM 6875 / VKM B-1610 / KT).